Consider the following 508-residue polypeptide: Kinesin light chain 3 (508 aa).

The tract at residues 1–20 is disordered; it reads MSVQVAAPGSTGLGPERLNP. Residues 88 to 150 are a coiled coil; it reads LLALSAHVSV…EEEKSHLQFL (63 aa). Residues 154–197 form a disordered region; sequence RQYDPPEESQRPESPPRRDSLASLFPSEEEEKKGPEAAGAAAAQ. A compositionally biased stretch (basic and acidic residues) spans 161–173; sequence ESQRPESPPRRDS. At serine 173 the chain carries Phosphoserine. TPR repeat units follow at residues 207–240, 249–282, 291–324, 333–366, and 375–408; these read LRTL…LERS, ATML…REQT, AATL…REKV, AKQL…YEAL, and AKTK…EALP. Residues 409–441 are disordered; sequence APLGAPQGGTAGDTQQQVLRRSSSFSKLRESIR. Residues 420–434 are compositionally biased toward polar residues; it reads GDTQQQVLRRSSSFS. Serine 467 is subject to Phosphoserine. Positions 486–508 are disordered; the sequence is LSTRHLSEAPRTLSISTQDLSPR. The segment covering 498–508 has biased composition (polar residues); it reads LSISTQDLSPR. Threonine 502 carries the post-translational modification Phosphothreonine. Serine 506 is subject to Phosphoserine.

Belongs to the kinesin light chain family. In terms of assembly, oligomer composed of two heavy chains and two light chains. Associates with microtubulin in an ATP-dependent manner. Interacts with KIF5C. Interacts with ODF1. Interacts with LRGUK. Interacts with VDAC2. Expressed in postmeiotic male germ cells (at protein level). Expressed in the testes (at protein level). Expressed in spleen, intestine, brain and ovary.

It localises to the cytoplasm. The protein localises to the cytoskeleton. It is found in the mitochondrion. Kinesin is a microtubule-associated force-producing protein that may play a role in organelle transport. Plays a role during spermiogenesis in the development of the sperm tail midpiece and in the normal function of spermatozoa. May play a role in the formation of the mitochondrial sheath formation in the developing spermatid midpiece. The sequence is that of Kinesin light chain 3 (Klc3) from Mus musculus (Mouse).